The primary structure comprises 125 residues: MDPRLVRAGSLVLLLALLVQDQGAAHPARAGQKYKPLIRRSEEDSQALGQEGDVAARAADEEEDAAGPGDALRQPAFKTLLASREKRLQPEGSCFGQKMDRIGHVSGMGCNKFDPNKGSSSTGKK.

Positions 1-25 (MDPRLVRAGSLVLLLALLVQDQGAA) are cleaved as a signal peptide. Disordered stretches follow at residues 23–78 (GAAH…PAFK) and 105–125 (VSGM…TGKK). Positions 26-85 (HPARAGQKYKPLIRRSEEDSQALGQEGDVAARAADEEEDAAGPGDALRQPAFKTLLASRE) are excised as a propeptide. A disulfide bridge links cysteine 94 with cysteine 110.

Belongs to the natriuretic peptide family. As to expression, expressed by the venom gland.

The protein resides in the secreted. Its function is as follows. Exhibits natriuretic and vasodepressor activity. Acts by stimulating cGMP. The chain is Natriuretic peptide GNP1 from Varanus varius (Lace monitor lizard).